The following is a 121-amino-acid chain: Large ribosomal subunit protein bL12 (121 aa).

It belongs to the bacterial ribosomal protein bL12 family. As to quaternary structure, homodimer. Part of the ribosomal stalk of the 50S ribosomal subunit. Forms a multimeric L10(L12)X complex, where L10 forms an elongated spine to which 2 to 4 L12 dimers bind in a sequential fashion. Binds GTP-bound translation factors.

Functionally, forms part of the ribosomal stalk which helps the ribosome interact with GTP-bound translation factors. Is thus essential for accurate translation. This is Large ribosomal subunit protein bL12 from Xanthomonas euvesicatoria pv. vesicatoria (strain 85-10) (Xanthomonas campestris pv. vesicatoria).